An 809-amino-acid chain; its full sequence is Valine--tRNA ligase (809 aa).

The 'HIGH' region motif lies at 60 to 70 (PFTSGELHMGH). Positions 546–550 (RMSKS) match the 'KMSKS' region motif. Residue Lys549 coordinates ATP.

Belongs to the class-I aminoacyl-tRNA synthetase family. ValS type 2 subfamily.

It is found in the cytoplasm. It carries out the reaction tRNA(Val) + L-valine + ATP = L-valyl-tRNA(Val) + AMP + diphosphate. Catalyzes the attachment of valine to tRNA(Val). As ValRS can inadvertently accommodate and process structurally similar amino acids such as threonine, to avoid such errors, it has a 'posttransfer' editing activity that hydrolyzes mischarged Thr-tRNA(Val) in a tRNA-dependent manner. The protein is Valine--tRNA ligase of Sulfurisphaera tokodaii (strain DSM 16993 / JCM 10545 / NBRC 100140 / 7) (Sulfolobus tokodaii).